Reading from the N-terminus, the 43-residue chain is Protein PsbN (43 aa).

A helical membrane pass occupies residues 7–29; it reads IVIFVSSLLLGITTYSVYTAFGP.

This sequence belongs to the PsbN family.

It is found in the plastid. The protein resides in the chloroplast thylakoid membrane. May play a role in photosystem I and II biogenesis. In Phaeodactylum tricornutum (strain CCAP 1055/1), this protein is Protein PsbN.